A 90-amino-acid chain; its full sequence is Large ribosomal subunit protein bL27 (90 aa).

The tract at residues 1 to 20 (MAHKKAGGSSRNGRDSAGKR) is disordered.

It belongs to the bacterial ribosomal protein bL27 family.

This Nitrobacter hamburgensis (strain DSM 10229 / NCIMB 13809 / X14) protein is Large ribosomal subunit protein bL27.